A 241-amino-acid chain; its full sequence is MASNSLMSCGIAAVYPSLLSSSKSKFVSAGVPLPNAGNVGRIRMAAHWMPGEPRPAYLDGSAPGDFGFDPLGLGEVPANLERYKESELIHCRWAMLAVPGILVPEALGYGNWVKAQEWAALPGGQATYLGNPVPWGTLPTILAIEFLAIAFVEHQRSMEKDPEKKKYPGGAFDPLGYSKDPKKLEELKVKEIKNGRLALLAFVGFCVQQSAYPGTGPLENLATHLADPWHNNIGDIVIPFN.

Residues 1 to 35 (MASNSLMSCGIAAVYPSLLSSSKSKFVSAGVPLPN) constitute a chloroplast transit peptide. Tryptophan 48 serves as a coordination point for chlorophyll b. The chlorophyll a site is built by phenylalanine 68, glutamate 87, and histidine 90. Arginine 92 contacts chlorophyll b. A helical membrane pass occupies residues 93-113 (WAMLAVPGILVPEALGYGNWV). Position 129 (leucine 129) interacts with chlorophyll a. Residues 132–152 (PVPWGTLPTILAIEFLAIAFV) traverse the membrane as a helical segment. Chlorophyll b-binding residues include valine 133, glutamate 153, and arginine 156. 6 residues coordinate chlorophyll a: lysine 190, glutamate 191, asparagine 194, arginine 196, glutamine 208, and histidine 224. Residues 197–217 (LALLAFVGFCVQQSAYPGTGP) traverse the membrane as a helical segment.

It belongs to the light-harvesting chlorophyll a/b-binding (LHC) protein family. The LHC complex consists of chlorophyll a-b binding proteins. Red-emitting heterodimer with LHCA4. Interacts with LHCA5. Requires Binds at least 14 chlorophylls (8 Chl-a and 6 Chl-b) and carotenoids such as lutein and neoxanthin. as cofactor. In terms of processing, photoregulated by reversible phosphorylation of its threonine residues.

Its subcellular location is the plastid. It localises to the chloroplast thylakoid membrane. The light-harvesting complex (LHC) functions as a light receptor, it captures and delivers excitation energy to photosystems with which it is closely associated. In Arabidopsis thaliana (Mouse-ear cress), this protein is Chlorophyll a-b binding protein 6, chloroplastic.